The primary structure comprises 769 residues: Signal transducer and activator of transcription 3.1 (769 aa).

The Essential for nuclear import signature appears at 150-162 (DVRKKVQDLEQKM). An SH2 domain is found at 580–670 (WNEGYIMGFI…DATNILVSPL (91 aa)). Residue Ser728 is modified to Phosphoserine; by NLK.

It belongs to the transcription factor STAT family. Forms a homodimer or a heterodimer with a related family member, such as stat1. Interacts with nlk.2. In terms of processing, phosphorylation of both tyrosine and serine residues, together with dimerization, is required for mesoderm induction.

The protein resides in the cytoplasm. It localises to the nucleus. Transcription factor that binds to target promoter sequences and activates transcription upon il6st/gp130 stimulation. Mediates ventralization of embryos, at least in part via inhibition of smad2 signaling. Required for hairy2 to induce dll1/delta1 and promote neural crest cell proliferation and differentiation. Involved in TGFbeta-mediated mesoderm induction in early embryos, acting downstream of map3k7/tak1 and nlk.2. This is Signal transducer and activator of transcription 3.1 (stat3.1) from Xenopus laevis (African clawed frog).